The primary structure comprises 303 residues: Acetylglutamate kinase (303 aa).

Residues 67 to 68, arginine 89, and asparagine 193 each bind substrate; that span reads GG.

The protein belongs to the acetylglutamate kinase family. ArgB subfamily.

The protein resides in the cytoplasm. It catalyses the reaction N-acetyl-L-glutamate + ATP = N-acetyl-L-glutamyl 5-phosphate + ADP. It participates in amino-acid biosynthesis; L-arginine biosynthesis; N(2)-acetyl-L-ornithine from L-glutamate: step 2/4. Catalyzes the ATP-dependent phosphorylation of N-acetyl-L-glutamate. The polypeptide is Acetylglutamate kinase (Acinetobacter baylyi (strain ATCC 33305 / BD413 / ADP1)).